Reading from the N-terminus, the 67-residue chain is ATP synthase F(0) complex subunit 8 (67 aa).

Residues threonine 8–methionine 24 traverse the membrane as a helical segment. Lysine 54 carries the post-translational modification N6-acetyllysine; alternate. Residue lysine 54 is modified to N6-succinyllysine; alternate. At lysine 57 the chain carries N6-acetyllysine.

It belongs to the ATPase protein 8 family. Component of the ATP synthase complex composed at least of ATP5F1A/subunit alpha, ATP5F1B/subunit beta, ATP5MC1/subunit c (homooctomer), MT-ATP6/subunit a, MT-ATP8/subunit 8, ATP5ME/subunit e, ATP5MF/subunit f, ATP5MG/subunit g, ATP5MK/subunit k, ATP5MJ/subunit j, ATP5F1C/subunit gamma, ATP5F1D/subunit delta, ATP5F1E/subunit epsilon, ATP5PF/subunit F6, ATP5PB/subunit b, ATP5PD/subunit d, ATP5PO/subunit OSCP. ATP synthase complex consists of a soluble F(1) head domain (subunits alpha(3) and beta(3)) - the catalytic core - and a membrane F(0) domain - the membrane proton channel (subunits c, a, 8, e, f, g, k and j). These two domains are linked by a central stalk (subunits gamma, delta, and epsilon) rotating inside the F1 region and a stationary peripheral stalk (subunits F6, b, d, and OSCP). Interacts with PRICKLE3.

Its subcellular location is the mitochondrion membrane. Functionally, subunit 8, of the mitochondrial membrane ATP synthase complex (F(1)F(0) ATP synthase or Complex V) that produces ATP from ADP in the presence of a proton gradient across the membrane which is generated by electron transport complexes of the respiratory chain. ATP synthase complex consist of a soluble F(1) head domain - the catalytic core - and a membrane F(1) domain - the membrane proton channel. These two domains are linked by a central stalk rotating inside the F(1) region and a stationary peripheral stalk. During catalysis, ATP synthesis in the catalytic domain of F(1) is coupled via a rotary mechanism of the central stalk subunits to proton translocation. In vivo, can only synthesize ATP although its ATP hydrolase activity can be activated artificially in vitro. Part of the complex F(0) domain. The chain is ATP synthase F(0) complex subunit 8 from Dasypus novemcinctus (Nine-banded armadillo).